The sequence spans 152 residues: Deoxyuridine 5'-triphosphate nucleotidohydrolase (152 aa).

Substrate contacts are provided by residues 71-73 (RSG), Asn-84, 88-90 (LID), and Lys-98.

This sequence belongs to the dUTPase family. The cofactor is Mg(2+).

It catalyses the reaction dUTP + H2O = dUMP + diphosphate + H(+). The protein operates within pyrimidine metabolism; dUMP biosynthesis; dUMP from dCTP (dUTP route): step 2/2. In terms of biological role, this enzyme is involved in nucleotide metabolism: it produces dUMP, the immediate precursor of thymidine nucleotides and it decreases the intracellular concentration of dUTP so that uracil cannot be incorporated into DNA. In Legionella pneumophila subsp. pneumophila (strain Philadelphia 1 / ATCC 33152 / DSM 7513), this protein is Deoxyuridine 5'-triphosphate nucleotidohydrolase.